A 77-amino-acid polypeptide reads, in one-letter code: DNA-directed RNA polymerase subunit epsilon (77 aa).

This sequence belongs to the RNA polymerase subunit epsilon family. As to quaternary structure, RNAP is composed of a core of 2 alpha, a beta and a beta' subunit. The core is associated with a delta subunit, and at least one of epsilon or omega. When a sigma factor is associated with the core the holoenzyme is formed, which can initiate transcription.

It carries out the reaction RNA(n) + a ribonucleoside 5'-triphosphate = RNA(n+1) + diphosphate. In terms of biological role, a non-essential component of RNA polymerase (RNAP). The polypeptide is DNA-directed RNA polymerase subunit epsilon (Streptococcus pneumoniae serotype 2 (strain D39 / NCTC 7466)).